The primary structure comprises 628 residues: Zinc finger protein 555 (628 aa).

One can recognise a KRAB domain in the interval 4 to 77; that stretch reads VVFEDVAVDF…ESKIATFTRN (74 aa). The C2H2-type 1; degenerate zinc-finger motif lies at 172 to 194; sequence YQCQECGQAYSCRSHLRMHVRTH. 14 consecutive C2H2-type zinc fingers follow at residues 200 to 222, 228 to 250, 256 to 278, 284 to 306, 312 to 334, 340 to 362, 368 to 390, 396 to 418, 424 to 446, 452 to 474, 480 to 502, 508 to 530, 536 to 558, and 564 to 586; these read YVCKLCGKTFPRTSSLNRHVRIH, YECKQCGKAFIDFSSLTSHLRSH, YKCKECGKAFSYSSTFRRHTITH, YKCKECAEAFSYSSTFRRHMISH, HKCKECGEAFSYSSAFRRHMITH, YECKQCGKTFIYLQSFRRHERIH, YECKQCGKTFIYPQSFRRHERTH, YECNQCGKAFSHPSSFRGHMRVH, YECKQCGKTFNWPISLRKHMRTH, YECKQCGKAFSLSACFREHVRMH, YECKLCGKAFYCHISLQKHMRRH, YKCKQCGKAFSWPELLQQHVRTH, YECKECGKVFKWPSSLPIHMRLH, and YQCKHCGKAFNCSSSLRRHVRIH.

The protein belongs to the krueppel C2H2-type zinc-finger protein family.

The protein resides in the nucleus. May be involved in transcriptional regulation. This is Zinc finger protein 555 (ZNF555) from Homo sapiens (Human).